The chain runs to 235 residues: Probable septum site-determining protein MinC (235 aa).

The segment at Lys104–Pro125 is disordered. Residues Pro110 to Pro119 show a composition bias toward pro residues.

Belongs to the MinC family. As to quaternary structure, interacts with MinD and FtsZ.

Its function is as follows. Cell division inhibitor that blocks the formation of polar Z ring septums. Rapidly oscillates between the poles of the cell to destabilize FtsZ filaments that have formed before they mature into polar Z rings. Prevents FtsZ polymerization. In Salmonella agona (strain SL483), this protein is Probable septum site-determining protein MinC.